A 95-amino-acid chain; its full sequence is Selenoprotein K (95 aa).

Residues Leu-20 to Ile-42 traverse the membrane as a helical segment. The segment at Thr-47 to Arg-95 is disordered. Residue Sec-93 is a non-standard amino acid, selenocysteine.

This sequence belongs to the selenoprotein K family.

The protein resides in the endoplasmic reticulum membrane. It localises to the cell membrane. Functionally, required for Ca(2+) flux in immune cells and plays a role in T-cell proliferation and in T-cell and neutrophil migration. Involved in endoplasmic reticulum-associated degradation (ERAD) of soluble glycosylated proteins. Required for cell surface expression of CD36 and involved in macrophage uptake of low-density lipoprotein and in foam cell formation. Required for palmitoylation. The protein is Selenoprotein K (selenok) of Xenopus laevis (African clawed frog).